Here is a 221-residue protein sequence, read N- to C-terminus: Ribosomal RNA small subunit methyltransferase G (221 aa).

S-adenosyl-L-methionine is bound by residues Gly-90, Leu-95, 141-142, and Arg-154; that span reads VE.

The protein belongs to the methyltransferase superfamily. RNA methyltransferase RsmG family.

It localises to the cytoplasm. It carries out the reaction guanosine(527) in 16S rRNA + S-adenosyl-L-methionine = N(7)-methylguanosine(527) in 16S rRNA + S-adenosyl-L-homocysteine. In terms of biological role, specifically methylates the N7 position of guanine in position 527 of 16S rRNA. The chain is Ribosomal RNA small subunit methyltransferase G from Polaromonas naphthalenivorans (strain CJ2).